Here is a 613-residue protein sequence, read N- to C-terminus: Cilia- and flagella-associated protein 100 (613 aa).

Positions 36–55 are disordered; sequence KSKESKKNKGNVTISDRSSN. The segment covering 45-55 has biased composition (polar residues); that stretch reads GNVTISDRSSN. 4 coiled-coil regions span residues 167-198, 233-260, 396-435, and 504-580; these read ALAMKRNEIQRLEMLATREENRLERAEKFLEK, VEIRELTAQITSIKSEISKFEDTLKHYK, FTKLEEENLSLIQNTQEMEETLDELNVTLKNTQIRMDKEV, and GTVQ…RGRK.

This sequence belongs to the CFAP100 family.

It localises to the cytoplasm. The protein resides in the cytoskeleton. It is found in the cilium axoneme. May play a role in ciliary/flagellar motility by regulating the assembly and the activity of axonemal inner dynein arm. In Mus musculus (Mouse), this protein is Cilia- and flagella-associated protein 100.